The sequence spans 1048 residues: Copper-dependent transcription factor 1 (1048 aa).

A DNA-binding region (copper-fist) is located at residues methionine 1–serine 40. Zn(2+)-binding residues include cysteine 11, cysteine 14, cysteine 23, and histidine 25. Low complexity predominate over residues alanine 85–alanine 99. Disordered stretches follow at residues alanine 85 to proline 117 and histidine 178 to valine 273. Positions threonine 211–glutamate 222 are enriched in polar residues. The CRM-I signature appears at cysteine 348 to histidine 362. The short motif at cysteine 455–cysteine 482 is the CRM-II element. Disordered stretches follow at residues serine 506–serine 702 and glycine 835–proline 876. Composition is skewed to polar residues over residues glutamine 527–serine 536, proline 550–threonine 565, glycine 629–arginine 645, serine 664–isoleucine 682, and alanine 692–serine 702. Low complexity predominate over residues glycine 835 to threonine 845. The span at asparagine 846–threonine 868 shows a compositional bias: polar residues.

The protein localises to the nucleus. It localises to the cytoplasm. It is found in the cell cortex. Functionally, transcription factor that regulates copper acquisition and homeostasis, and which plays a central role in fungal pathogenesis during neurologic infection. The transcriptional regulation exerted by CUF1 is intrinsically complex since it acts as a dual sensor of copper levels, responsible for expression of a set of copper-specific copper transporters, CTR1 and CTR4, at low copper concentrations, and 2 metallothioneins, CMT1 and CMT2, at high copper concentrations. Positively regulates the expression of the copper acquisition factor BIM1 under copper-limiting conditions. Also positively regulates the expression of super oxide dismutase SOD2 isoform 2 during oxidative stress and copper-limiting conditions. Negatively regulates the expression of super oxide dismutase SOD1 during copper-limiting conditions. Also regulates ATM1, an ABC transporter with functions in the iron-sulfur clusters (ISC) export machinery, during copper stress. Another target of CUF1 is the gene encoding the laccase LAC1. Binds promoters of target genes at Cu-responsive elements (CuREs) that contain a variable A/T rich 5' region followed by the core consensus sequence 5'-G(G/C)CTC(A/G)-3'. Negatively regulates capsule biosynthesis, probably via modulating iron acquisition through the high-affinity iron uptake pathway. This is Copper-dependent transcription factor 1 from Cryptococcus neoformans var. grubii serotype A (strain H99 / ATCC 208821 / CBS 10515 / FGSC 9487) (Filobasidiella neoformans var. grubii).